The primary structure comprises 249 residues: tRNA (guanine-N(1)-)-methyltransferase (249 aa).

Residues G113 and 133-138 contribute to the S-adenosyl-L-methionine site; that span reads IGDFVL.

The protein belongs to the RNA methyltransferase TrmD family. Homodimer.

It localises to the cytoplasm. The enzyme catalyses guanosine(37) in tRNA + S-adenosyl-L-methionine = N(1)-methylguanosine(37) in tRNA + S-adenosyl-L-homocysteine + H(+). In terms of biological role, specifically methylates guanosine-37 in various tRNAs. The chain is tRNA (guanine-N(1)-)-methyltransferase from Aliivibrio fischeri (strain ATCC 700601 / ES114) (Vibrio fischeri).